The primary structure comprises 536 residues: Indolin-2-one monooxygenase (536 aa).

A helical membrane pass occupies residues 18-34 (GTATHALLLGVLIFLVI). Residue Cys480 participates in heme binding.

It belongs to the cytochrome P450 family. It depends on heme as a cofactor.

It localises to the membrane. The enzyme catalyses indolin-2-one + reduced [NADPH--hemoprotein reductase] + O2 = 3-hydroxyindolin-2-one + oxidized [NADPH--hemoprotein reductase] + H2O + H(+). Its pathway is secondary metabolite biosynthesis; 2,4-dihydroxy-1,4-benzoxazin-3-one biosynthesis; 2,4-dihydroxy-1,4-benzoxazin-3-one from indoleglycerol phosphate: step 3/5. Functionally, catalyzes the conversion of indolin-2-one to 3-hydroxyindolin-2-one. The chain is Indolin-2-one monooxygenase (CYP71C2) from Zea mays (Maize).